The sequence spans 160 residues: Large ribosomal subunit protein eL21 (160 aa).

This sequence belongs to the eukaryotic ribosomal protein eL21 family.

The polypeptide is Large ribosomal subunit protein eL21 (RPL21) (Encephalitozoon cuniculi (strain GB-M1) (Microsporidian parasite)).